The chain runs to 98 residues: DNA-binding protein Fis (98 aa).

The H-T-H motif DNA-binding region spans 74 to 93 (QTRAATMLGINRGTLRKKLK).

Belongs to the transcriptional regulatory Fis family. As to quaternary structure, homodimer.

In terms of biological role, activates ribosomal RNA transcription. Plays a direct role in upstream activation of rRNA promoters. The sequence is that of DNA-binding protein Fis from Haemophilus ducreyi (strain 35000HP / ATCC 700724).